A 423-amino-acid polypeptide reads, in one-letter code: Hypoxia responsive morphology factor B (423 aa).

Positions Lys-46–Val-69 match the Bipartite nuclear localization signal motif. The segment at Thr-157–Pro-187 is RNA recognition motif (RRM)-like domain. Residues Leu-243–Ile-257 show a composition bias toward polar residues. Residues Leu-243 to Ser-273 are disordered.

The protein belongs to the hrmA family.

The protein resides in the nucleus. Functionally, probably modulates the generation of the hypoxia-typic morphotype (called H-MORPH) with altered biofilm architecture that leads to increased host inflammation, rapid disease progression, and mortality in a murine model of invasive aspergillosis. The polypeptide is Hypoxia responsive morphology factor B (Aspergillus fumigatus (strain CBS 144.89 / FGSC A1163 / CEA10) (Neosartorya fumigata)).